The following is a 188-amino-acid chain: Apolipoprotein M (188 aa).

The segment at residues 1–22 (MFHQIWAALLYFYGIILNSIYQ) is a signal peptide (not cleaved). 3 disulfides stabilise this stretch: C23–C167, C95–C183, and C128–C157. A glycan (N-linked (GlcNAc...) asparagine) is linked at N135. The tetradecanoate site is built by E136 and R143.

This sequence belongs to the calycin superfamily. Lipocalin family. Highly divergent. In terms of assembly, interacts with LRP2; LRP2 mediates APOM renal uptake and subsequent lysosomal degradation.

The protein localises to the secreted. Its function is as follows. Probably involved in lipid transport. Can bind sphingosine-1-phosphate, myristic acid, palmitic acid and stearic acid, retinol, all-trans-retinoic acid and 9-cis-retinoic acid. The protein is Apolipoprotein M (APOM) of Pongo abelii (Sumatran orangutan).